Consider the following 460-residue polypeptide: Probable glucan endo-1,3-beta-glucosidase eglC (460 aa).

The signal sequence occupies residues 1–18 (MQLAQLAAFAMTLATSEA). Catalysis depends on Glu-128, which acts as the Proton donor. Asn-183 carries an N-linked (GlcNAc...) asparagine glycan. Residue Glu-239 is the Nucleophile of the active site. 3 N-linked (GlcNAc...) asparagine glycosylation sites follow: Asn-312, Asn-367, and Asn-373. Residues 379-437 (RPSGSASARPSAGAISSGSGSSSSGSGSSGSTGTSATSGQSSSSGSSAAAGSSSPAAFS) are disordered. A compositionally biased stretch (low complexity) spans 380–437 (PSGSASARPSAGAISSGSGSSSSGSGSSGSTGTSATSGQSSSSGSSAAAGSSSPAAFS). Ser-430 carries GPI-anchor amidated serine lipidation. The propeptide at 431–460 (SSPAAFSGASTLSGSLFGAVVAVFMTLAAL) is removed in mature form.

It belongs to the glycosyl hydrolase 17 family. The GPI-anchor is attached to the protein in the endoplasmic reticulum and serves to target the protein to the cell surface. There, the glucosamine-inositol phospholipid moiety is cleaved off and the GPI-modified mannoprotein is covalently attached via its lipidless GPI glycan remnant to the 1,6-beta-glucan of the outer cell wall layer.

The protein resides in the cell membrane. It is found in the secreted. It localises to the cell wall. The enzyme catalyses Hydrolysis of (1-&gt;3)-beta-D-glucosidic linkages in (1-&gt;3)-beta-D-glucans.. Functionally, glucanases play a role in cell expansion during growth, in cell-cell fusion during mating, and in spore release during sporulation. This enzyme may be involved in beta-glucan degradation and also function biosynthetically as a transglycosylase. The chain is Probable glucan endo-1,3-beta-glucosidase eglC (eglC) from Aspergillus niger (strain ATCC MYA-4892 / CBS 513.88 / FGSC A1513).